An 80-amino-acid chain; its full sequence is Small ribosomal subunit protein bS21 (80 aa).

It belongs to the bacterial ribosomal protein bS21 family.

This chain is Small ribosomal subunit protein bS21, found in Rhodospirillum rubrum (strain ATCC 11170 / ATH 1.1.1 / DSM 467 / LMG 4362 / NCIMB 8255 / S1).